Here is a 208-residue protein sequence, read N- to C-terminus: Uracil phosphoribosyltransferase (208 aa).

Residues Arg-78, Arg-103, and 130–138 (DPMLATGGS) contribute to the 5-phospho-alpha-D-ribose 1-diphosphate site. Uracil-binding positions include Ile-193 and 198–200 (GDA). Asp-199 lines the 5-phospho-alpha-D-ribose 1-diphosphate pocket.

This sequence belongs to the UPRTase family. Mg(2+) is required as a cofactor.

The enzyme catalyses UMP + diphosphate = 5-phospho-alpha-D-ribose 1-diphosphate + uracil. It participates in pyrimidine metabolism; UMP biosynthesis via salvage pathway; UMP from uracil: step 1/1. With respect to regulation, allosterically activated by GTP. Functionally, catalyzes the conversion of uracil and 5-phospho-alpha-D-ribose 1-diphosphate (PRPP) to UMP and diphosphate. In Shewanella piezotolerans (strain WP3 / JCM 13877), this protein is Uracil phosphoribosyltransferase.